The following is a 570-amino-acid chain: Sulfite reductase [NADPH] hemoprotein beta-component (570 aa).

Residues Cys-434, Cys-440, Cys-479, and Cys-483 each coordinate [4Fe-4S] cluster. Residue Cys-483 participates in siroheme binding.

The protein belongs to the nitrite and sulfite reductase 4Fe-4S domain family. In terms of assembly, alpha(8)-beta(8). The alpha component is a flavoprotein, the beta component is a hemoprotein. Requires siroheme as cofactor. [4Fe-4S] cluster is required as a cofactor.

It carries out the reaction hydrogen sulfide + 3 NADP(+) + 3 H2O = sulfite + 3 NADPH + 4 H(+). Its pathway is sulfur metabolism; hydrogen sulfide biosynthesis; hydrogen sulfide from sulfite (NADPH route): step 1/1. Functionally, component of the sulfite reductase complex that catalyzes the 6-electron reduction of sulfite to sulfide. This is one of several activities required for the biosynthesis of L-cysteine from sulfate. This is Sulfite reductase [NADPH] hemoprotein beta-component from Zymomonas mobilis subsp. mobilis (strain ATCC 31821 / ZM4 / CP4).